Reading from the N-terminus, the 429-residue chain is Citrate synthase, plasmid (429 aa).

Catalysis depends on residues His306 and Asp364.

This sequence belongs to the citrate synthase family.

The catalysed reaction is oxaloacetate + acetyl-CoA + H2O = citrate + CoA + H(+). It functions in the pathway carbohydrate metabolism; tricarboxylic acid cycle; isocitrate from oxaloacetate: step 1/2. In terms of biological role, the exact function of the plasmid-encoded citrate synthase is not clear, it could help nodulation by allowing the bacteria to use citrate as a chelator of iron and calcium. This Rhizobium tropici protein is Citrate synthase, plasmid (pcsA).